A 262-amino-acid chain; its full sequence is Small ribosomal subunit protein eS4y (262 aa).

An S4 RNA-binding domain is found at 42 to 104 (LPLVLIIRNR…TNENFRLLYD (63 aa)).

The protein belongs to the eukaryotic ribosomal protein eS4 family.

It localises to the cytoplasm. This is Small ribosomal subunit protein eS4y (RPS4B) from Arabidopsis thaliana (Mouse-ear cress).